A 203-amino-acid chain; its full sequence is Imidazoleglycerol-phosphate dehydratase (203 aa).

It belongs to the imidazoleglycerol-phosphate dehydratase family.

It localises to the cytoplasm. The catalysed reaction is D-erythro-1-(imidazol-4-yl)glycerol 3-phosphate = 3-(imidazol-4-yl)-2-oxopropyl phosphate + H2O. It participates in amino-acid biosynthesis; L-histidine biosynthesis; L-histidine from 5-phospho-alpha-D-ribose 1-diphosphate: step 6/9. In Salinispora tropica (strain ATCC BAA-916 / DSM 44818 / JCM 13857 / NBRC 105044 / CNB-440), this protein is Imidazoleglycerol-phosphate dehydratase.